The primary structure comprises 75 residues: Large ribosomal subunit protein bL31 (75 aa).

In terms of assembly, part of the 50S ribosomal subunit.

Functionally, binds the 23S rRNA. In Rhodopseudomonas palustris (strain ATCC BAA-98 / CGA009), this protein is Large ribosomal subunit protein bL31.